The following is a 67-amino-acid chain: DNA-directed RNA polymerase subunit omega (67 aa).

It belongs to the RNA polymerase subunit omega family. In terms of assembly, the RNAP catalytic core consists of 2 alpha, 1 beta, 1 beta' and 1 omega subunit. When a sigma factor is associated with the core the holoenzyme is formed, which can initiate transcription.

The catalysed reaction is RNA(n) + a ribonucleoside 5'-triphosphate = RNA(n+1) + diphosphate. Functionally, promotes RNA polymerase assembly. Latches the N- and C-terminal regions of the beta' subunit thereby facilitating its interaction with the beta and alpha subunits. This chain is DNA-directed RNA polymerase subunit omega, found in Bacillus velezensis (strain DSM 23117 / BGSC 10A6 / LMG 26770 / FZB42) (Bacillus amyloliquefaciens subsp. plantarum).